Consider the following 66-residue polypeptide: SPbeta prophage-derived uncharacterized protein YopM (66 aa).

In Bacillus subtilis (strain 168), this protein is SPbeta prophage-derived uncharacterized protein YopM (yopM).